We begin with the raw amino-acid sequence, 1576 residues long: Proton channel OtopLc (1576 aa).

Disordered regions lie at residues 1 to 602 and 621 to 736; these read MDSS…SSPP and QIGS…SSPV. Composition is skewed to low complexity over residues 58–67 and 76–85; these read SLAEEVLLLV and LLGQPLPTLT. 4 stretches are compositionally biased toward acidic residues: residues 103–116, 159–171, 186–198, and 206–216; these read DEGD…EPVP, DDGE…DAEE, SNPD…EEQE, and PKEEDEEEDDD. Residues 219 to 228 are compositionally biased toward pro residues; it reads TPPPPLPPLP. A compositionally biased stretch (polar residues) spans 229–241; it reads SNFSYVQGHNLGQ. Asn230 carries N-linked (GlcNAc...) asparagine glycosylation. The segment covering 243-252 has biased composition (low complexity); that stretch reads TPPLTKSPSN. Residues 253–264 are compositionally biased toward pro residues; sequence SPSPPVTPPPCP. N-linked (GlcNAc...) asparagine glycosylation occurs at Asn267. The span at 316–341 shows a compositional bias: acidic residues; that stretch reads DQPEPEDQPPEPENEPEPEPEPEPEP. Residues 347–356 are compositionally biased toward basic and acidic residues; that stretch reads AREDYSRSLD. Residues 362-376 are compositionally biased toward polar residues; it reads TTITTPPSNGYSASS. A compositionally biased stretch (basic and acidic residues) spans 384–393; it reads HFAELDEDRG. The span at 402–419 shows a compositional bias: acidic residues; the sequence is QEPEEEVEEEEEEEEEEL. Residues 420-433 show a composition bias toward basic and acidic residues; that stretch reads TKETDEISVDRESL. A compositionally biased stretch (polar residues) spans 434-457; it reads QDQGGDSISSPRPASILTGSISTS. Positions 465–507 are enriched in low complexity; sequence SPKPESRGPSRSGSQRSQLRSGSQQGSIAESRGGSRIGSRTGS. Composition is skewed to polar residues over residues 519 to 534 and 545 to 555; these read PQAS…SQGQ and KSGSQRMQSPQ. Over residues 563–575 the composition is skewed to pro residues; that stretch reads MPSPPLMRSPPPE. Positions 661–685 are enriched in low complexity; sequence AAAAPAVTTTAATTAVTSQPRSHFT. Residues 686–709 show a composition bias toward basic residues; the sequence is SSHHHYHLPHQFQHPHHQNHHTHS. Residues 741–761 form a helical membrane-spanning segment; sequence LFMAGVAPPIAAGAGSLMAMP. The tract at residues 771–845 is disordered; the sequence is GRVSARSGSQ…GSSSQPALSG (75 aa). Residues 776 to 799 show a composition bias toward polar residues; the sequence is RSGSQHHVTIDESSLPSHKGNIQE. Positions 826 to 839 are enriched in low complexity; sequence DSSDPPSSPGGSSS. Helical transmembrane passes span 891–911 and 931–951; these read ALAT…GIAF and LYLY…LIWG. Residues 962 to 973 are compositionally biased toward polar residues; that stretch reads PSKSATKASGTD. The disordered stretch occupies residues 962-1001; sequence PSKSATKASGTDSMDESDTDSNSVHHRLPPPIPVRRPSLL. A run of 3 helical transmembrane segments spans residues 1019 to 1039, 1051 to 1071, and 1084 to 1104; these read GAVA…GQYF, LLAL…YFIF, and IIAR…WLNV. The N-linked (GlcNAc...) asparagine glycan is linked to Asn1121. The next 7 membrane-spanning stretches (helical) occupy residues 1179 to 1199, 1239 to 1259, 1272 to 1292, 1310 to 1330, 1340 to 1360, 1381 to 1401, and 1412 to 1432; these read FLFP…YVMW, FVGI…FVLI, VTIC…VGMI, ILLV…VIAG, LVPI…MFIL, IVTF…LEKS, and FYGL…AIFY. Asn1479 carries N-linked (GlcNAc...) asparagine glycosylation. Positions 1498-1549 are disordered; that stretch reads EEVDSGESNSAEDAGAGAGSGGSRGSGGGAGAAEAGEAGEEGQQGGDSSCGL. A compositionally biased stretch (low complexity) spans 1503-1512; sequence GESNSAEDAG. Positions 1513–1528 are enriched in gly residues; it reads AGAGSGGSRGSGGGAG.

The protein belongs to the otopetrin family.

Its subcellular location is the cell membrane. Proton-selective channel that specifically transports protons into cells. Proton-selective channel activity is probably required in cell types that use changes in intracellular pH for cell signaling or to regulate biochemical or developmental processes. The sequence is that of Proton channel OtopLc from Drosophila melanogaster (Fruit fly).